We begin with the raw amino-acid sequence, 618 residues long: Dihydroxy-acid dehydratase (618 aa).

Asp-81 is a Mg(2+) binding site. Cys-122 is a [2Fe-2S] cluster binding site. Positions 123 and 124 each coordinate Mg(2+). An N6-carboxylysine modification is found at Lys-124. Position 197 (Cys-197) interacts with [2Fe-2S] cluster. Mg(2+) is bound at residue Glu-493. Ser-519 functions as the Proton acceptor in the catalytic mechanism.

It belongs to the IlvD/Edd family. Homodimer. The cofactor is [2Fe-2S] cluster. It depends on Mg(2+) as a cofactor.

The enzyme catalyses (2R)-2,3-dihydroxy-3-methylbutanoate = 3-methyl-2-oxobutanoate + H2O. It catalyses the reaction (2R,3R)-2,3-dihydroxy-3-methylpentanoate = (S)-3-methyl-2-oxopentanoate + H2O. Its pathway is amino-acid biosynthesis; L-isoleucine biosynthesis; L-isoleucine from 2-oxobutanoate: step 3/4. It functions in the pathway amino-acid biosynthesis; L-valine biosynthesis; L-valine from pyruvate: step 3/4. Functions in the biosynthesis of branched-chain amino acids. Catalyzes the dehydration of (2R,3R)-2,3-dihydroxy-3-methylpentanoate (2,3-dihydroxy-3-methylvalerate) into 2-oxo-3-methylpentanoate (2-oxo-3-methylvalerate) and of (2R)-2,3-dihydroxy-3-methylbutanoate (2,3-dihydroxyisovalerate) into 2-oxo-3-methylbutanoate (2-oxoisovalerate), the penultimate precursor to L-isoleucine and L-valine, respectively. In Bordetella avium (strain 197N), this protein is Dihydroxy-acid dehydratase.